The primary structure comprises 286 residues: 4-hydroxybenzoate octaprenyltransferase (286 aa).

7 helical membrane-spanning segments follow: residues I22–M42, L45–I65, L98–I118, F143–A163, I213–Q233, Y238–L255, and N266–I286.

Belongs to the UbiA prenyltransferase family. Requires Mg(2+) as cofactor.

It is found in the cell inner membrane. It catalyses the reaction all-trans-octaprenyl diphosphate + 4-hydroxybenzoate = 4-hydroxy-3-(all-trans-octaprenyl)benzoate + diphosphate. The protein operates within cofactor biosynthesis; ubiquinone biosynthesis. In terms of biological role, catalyzes the prenylation of para-hydroxybenzoate (PHB) with an all-trans polyprenyl group. Mediates the second step in the final reaction sequence of ubiquinone-8 (UQ-8) biosynthesis, which is the condensation of the polyisoprenoid side chain with PHB, generating the first membrane-bound Q intermediate 3-octaprenyl-4-hydroxybenzoate. This is 4-hydroxybenzoate octaprenyltransferase from Histophilus somni (strain 2336) (Haemophilus somnus).